The primary structure comprises 447 residues: Cytochrome c biogenesis protein CcsB (447 aa).

The next 3 helical transmembrane spans lie at 28 to 48 (LRLA…GTVI), 87 to 107 (TWWY…CTFR), and 173 to 193 (IGPI…IWGA).

Belongs to the Ccs1/CcsB family. In terms of assembly, may interact with CcsA.

The protein localises to the cellular thylakoid membrane. Functionally, required during biogenesis of c-type cytochromes (cytochrome c6 and cytochrome f) at the step of heme attachment. This Microcystis aeruginosa (strain NIES-843 / IAM M-2473) protein is Cytochrome c biogenesis protein CcsB.